A 225-amino-acid polypeptide reads, in one-letter code: UPF0758 protein SEQ_1136 (225 aa).

The 123-residue stretch at 102-224 folds into the MPN domain; that stretch reads PVLSSAQVAE…YYSFREKSDL (123 aa). H173, H175, and D186 together coordinate Zn(2+). The short motif at 173-186 is the JAMM motif element; that stretch reads HNHPSGLTKPSAND.

The protein belongs to the UPF0758 family.

The polypeptide is UPF0758 protein SEQ_1136 (Streptococcus equi subsp. equi (strain 4047)).